The following is a 142-amino-acid chain: UPF0179 protein PYRAB06360 (142 aa).

It belongs to the UPF0179 family.

The polypeptide is UPF0179 protein PYRAB06360 (Pyrococcus abyssi (strain GE5 / Orsay)).